The sequence spans 321 residues: Lipoyl synthase (321 aa).

C68, C73, C79, C94, C98, C101, and S308 together coordinate [4Fe-4S] cluster. The region spanning 80–297 (FNHGTATFMI…KEIALELGFT (218 aa)) is the Radical SAM core domain.

The protein belongs to the radical SAM superfamily. Lipoyl synthase family. It depends on [4Fe-4S] cluster as a cofactor.

The protein resides in the cytoplasm. It catalyses the reaction [[Fe-S] cluster scaffold protein carrying a second [4Fe-4S](2+) cluster] + N(6)-octanoyl-L-lysyl-[protein] + 2 oxidized [2Fe-2S]-[ferredoxin] + 2 S-adenosyl-L-methionine + 4 H(+) = [[Fe-S] cluster scaffold protein] + N(6)-[(R)-dihydrolipoyl]-L-lysyl-[protein] + 4 Fe(3+) + 2 hydrogen sulfide + 2 5'-deoxyadenosine + 2 L-methionine + 2 reduced [2Fe-2S]-[ferredoxin]. It functions in the pathway protein modification; protein lipoylation via endogenous pathway; protein N(6)-(lipoyl)lysine from octanoyl-[acyl-carrier-protein]: step 2/2. Catalyzes the radical-mediated insertion of two sulfur atoms into the C-6 and C-8 positions of the octanoyl moiety bound to the lipoyl domains of lipoate-dependent enzymes, thereby converting the octanoylated domains into lipoylated derivatives. The protein is Lipoyl synthase of Vibrio campbellii (strain ATCC BAA-1116).